The primary structure comprises 340 residues: Myomesin-1 (340 aa).

Positions 177-212 are disordered; the sequence is AEKARLKSRPSAPXTGQIIVTEEEPSEEAGTENXQR. Acidic residues predominate over residues 197–206; sequence TEEEPSEEAG.

As to quaternary structure, homodimer. Interacts with TTN/titin and PNKD. In terms of tissue distribution, seems to be expressed in all cardiac and skeletal fibers.

The protein localises to the cytoplasm. It is found in the myofibril. It localises to the sarcomere. The protein resides in the m line. Functionally, major component of the vertebrate myofibrillar M band. Binds myosin, titin, and light meromyosin. This binding is dose dependent. The polypeptide is Myomesin-1 (MYOM1) (Bos taurus (Bovine)).